Here is a 368-residue protein sequence, read N- to C-terminus: MSESPKKVIVGMSGGVDSSVSAWLLQQQGYQVEGLFMKNWEEDDGEEYCTAAADLADAQAVCDKLGIELHTVNFAAEYWDNVFELFLEEYKAGRTPNPDILCNKEIKFKAFLEFAAEDLGADYIATGHYVRRADVNGKSRLLRGLDGNKDQSYFLYTLGHEQIAQSLFPVGELEKPQVRKIAEDLGLVTAKKKDSTGICFIGERKFRDFLGRYLPAQPGKIITVDGDEIGEHQGLMYHTLGQRKGLGIGGTKDGSEDPWYVVDKDVENNVLIVAQGHEHPRLMSVGLIAQQLHWVDREPFTGTLRCTVKTRYRQTDIPCTINALDDDRIEVIFDEPVAAVTPGQSAVFYSGEVCLGGGIIEQRLPLTV.

Residues 11 to 18 (GMSGGVDS) and methionine 37 contribute to the ATP site. The segment at 97 to 99 (NPD) is interaction with target base in tRNA. Residue cysteine 102 is the Nucleophile of the active site. An intrachain disulfide couples cysteine 102 to cysteine 199. Residue glycine 127 participates in ATP binding. The interval 149–151 (KDQ) is interaction with tRNA. The active-site Cysteine persulfide intermediate is cysteine 199. The segment at 311–312 (RY) is interaction with tRNA.

It belongs to the MnmA/TRMU family. Interacts with TusE.

Its subcellular location is the cytoplasm. It carries out the reaction S-sulfanyl-L-cysteinyl-[protein] + uridine(34) in tRNA + AH2 + ATP = 2-thiouridine(34) in tRNA + L-cysteinyl-[protein] + A + AMP + diphosphate + H(+). Functionally, catalyzes the 2-thiolation of uridine at the wobble position (U34) of tRNA(Lys), tRNA(Glu) and tRNA(Gln), leading to the formation of s(2)U34, the first step of tRNA-mnm(5)s(2)U34 synthesis. Sulfur is provided by IscS, via a sulfur-relay system. Binds ATP and its substrate tRNAs. This is tRNA-specific 2-thiouridylase MnmA from Salmonella paratyphi B (strain ATCC BAA-1250 / SPB7).